The sequence spans 521 residues: MLWGFVFVSFISKELALGQSEYISWVKCTSWLSNFVNLRGLRQPDGRPLYEYHATNDEYTQLTQLLRAVGQSQSNICNRDFAACFVLFCSEWYRRDYERQCGWTWDPIYKKIGISFTATELGTIVPKGMEDYWLRPIRFYESERRNFLGTLFSEGGLPFRLLKESDSRFLAVFSRILGQYEQAKQSGFSALSLARAVIEKSALPTVFSEDTSVELISHMADNLNSLVLTHNLINHKEPVQQLEKVHPTWRSEFPIPLDDETGTHFLNGLLCAASVEAKPRLQKNKSTRCQFYWSEKHPDELRVIVSLPDEVSFPVTSEPSTTRFELAICEDGEEVSGLGPAYASLENRQATVRLRKSEVRFGRQNPSAGLSLVARAGGMIVGSIKLDDSEIAIGEVPLTFIVDADQWLLQGQASCSVRSSDVLIVLPRDNSNVAGFDGQSRAVNVLGLKALPVKGCQDVTVTANETYRIRTGREQISIGRFALNGKRASWVCHPDETFIGVPKVISTLPDIQSIDVTRYTC.

The polypeptide is Protein YjiT (yjiT) (Escherichia coli (strain K12)).